Consider the following 627-residue polypeptide: Myelin-associated glycoprotein (627 aa).

The first 19 residues, 1-19 (MIFLATLPLFWIMISASRG), serve as a signal peptide directing secretion. The interval 20 to 325 (GHWGAWMPST…RTVELSVMYA (306 aa)) is interaction with RTN4R and RTN4RL2. Residues 20 to 516 (GHWGAWMPST…HRLMWAKIGP (497 aa)) are Extracellular-facing. Residue W22 is glycosylated (C-linked (Man) tryptophan). The Ig-like V-type domain maps to 22–120 (WGAWMPSTIS…LGGKYYFRGD (99 aa)). 3 disulfides stabilise this stretch: C37-C165, C42-C100, and C159-C217. Residue 65–67 (YPK) participates in a ganglioside GT1b (d18:1(4E)) binding. N99 is a glycosylation site (N-linked (GlcNAc...) asparagine). Residues R118 and 124–128 (YNQYT) contribute to the a ganglioside GT1b (d18:1(4E)) site. 4 consecutive Ig-like C2-type domains span residues 139–237 (NTPN…LDVK), 241–325 (VIVE…VMYA), 327–412 (WKPT…VEFA), and 413–508 (PIIL…GAHR). N-linked (GlcNAc...) asparagine glycosylation is found at N223 and N246. Cysteines 261 and 305 form a disulfide. 2 N-linked (GlcNAc...) asparagine glycosylation sites follow: N315 and N332. C347 and C392 are oxidised to a cystine. The N-linked (GlcNAc...) asparagine glycan is linked to N406. Intrachain disulfides connect C421-C430 and C432-C488. N-linked (GlcNAc...) asparagine glycosylation is found at N450 and N454. Residues 517–536 (VGAVVAFAILIAIVCYITQT) traverse the membrane as a helical segment. Residue C531 is the site of S-palmitoyl cysteine attachment. Residues 537-627 (RRKKNVTESS…LAEYAEIRVK (91 aa)) are Cytoplasmic-facing. Phosphoserine occurs at positions 545, 547, 549, and 591. Residues 578–627 (LGSERRLLGLRGESPELDLSYSHSDLGKRPTKDSYTLTEELAEYAEIRVK) are required for normal axon myelination in the central nervous system.

It belongs to the immunoglobulin superfamily. SIGLEC (sialic acid binding Ig-like lectin) family. Monomer and homodimer. Interacts (via the first three N-terminal Ig-like domains) with RTN4R and RTN4RL2. Interacts with isoform 2 of BSG. N-glycosylated. Post-translationally, phosphorylated on tyrosine residues. In terms of processing, ubiquitinated, leading to proteasomal degradation. As to expression, detected in the myelin tract in brain, especially in the corpus callosum and in peripheral nerve. Expressed by myelinating glial cells in the central and peripheral nervous system. Detected in oligodendrocyte processes before formation of compact myelin. Restricted to the periaxonal space after myelination. Isoform S-MAG is the predominant isoform in CNS and PNS of the adult (at protein level).

The protein localises to the cell membrane. It is found in the membrane raft. Functionally, adhesion molecule that mediates interactions between myelinating cells and neurons by binding to neuronal sialic acid-containing gangliosides and to the glycoproteins RTN4R and RTN4RL2. Not required for initial myelination, but seems to play a role in the maintenance of normal axon myelination. Protects motoneurons against apoptosis, also after injury; protection against apoptosis is probably mediated via interaction with neuronal RTN4R and RTN4RL2. Required to prevent degeneration of myelinated axons in adults; this probably depends on binding to gangliosides on the axon cell membrane. Negative regulator of neurite outgrowth that inhibits axon longitudinal growth. Negative regulator of neurite outgrowth; in dorsal root ganglion neurons the inhibition is mediated primarily via binding to neuronal RTN4R or RTN4RL2 and to a lesser degree via binding to neuronal gangliosides. In cerebellar granule cells the inhibition is mediated via binding to neuronal gangliosides. In sensory neurons, inhibition of neurite extension depends only partially on RTN4R, RTN4RL2 and gangliosides. Inhibits axon outgrowth by binding to RTN4R. Preferentially binds to alpha-2,3-linked sialic acid. Binds ganglioside Gt1b. This chain is Myelin-associated glycoprotein (Mag), found in Mus musculus (Mouse).